Reading from the N-terminus, the 344-residue chain is MKVLSFLCVLLVSVATAKQQFSELQYRNAFTDWMITHQKSYTSEEFGARYNIFKANMDYVQQWNSKGSETVLGLNNFADITNEEYRNTYLGTKFDASSLIGTQEEKVFTTSSAASKDWRSEGAVTPVKNQGQCGGCWSFSTTGSTEGAHFQSKGELVSLSEQNLIDCSTENSGCDGGLMTYAFEYIINNNGIDTESSYPYKAENGKCEYKSENSGATLSSYKTVTAGSESSLESAVNVNPVSVAIDASHQSFQLYTSGIYYEPECSSENLDHGVLAVGYGSGSGSSSGQSSGQSSGNLSASSSNEYWIVKNSWGTSWGIEGYILMSRNRDNNCGIASSASFPVV.

The N-terminal stretch at 1–17 (MKVLSFLCVLLVSVATA) is a signal peptide. Positions 18-111 (KQQFSELQYR…TQEEKVFTTS (94 aa)) are cleaved as a propeptide — activation peptide. Disulfide bonds link C133/C174, C167/C207, and C265/C333. C136 is a catalytic residue. Residue H272 is part of the active site. The N-linked (GlcNAc...) asparagine glycan is linked to N297. Residue N311 is part of the active site.

Belongs to the peptidase C1 family. In terms of processing, glycosylated; contains GlcNAc-alpha-1-P-Ser residues.

The protein resides in the lysosome. This is Cysteine proteinase 5 (cprE) from Dictyostelium discoideum (Social amoeba).